A 1647-amino-acid polypeptide reads, in one-letter code: Nucleoporin nup186 (1647 aa).

The protein belongs to the NUP186/NUP192/NUP205 family.

The protein resides in the cytoplasm. Its subcellular location is the nucleus. In terms of biological role, functions as a component of the nuclear pore complex (NPC). NPC components, collectively referred to as nucleoporins (NUPs), can play the role of both NPC structural components and of docking or interaction partners for transiently associated nuclear transport factors. Active directional transport is assured by both, a Phe-Gly (FG) repeat affinity gradient for these transport factors across the NPC and a transport cofactor concentration gradient across the nuclear envelope. This chain is Nucleoporin nup186 (nup186), found in Schizosaccharomyces pombe (strain 972 / ATCC 24843) (Fission yeast).